The sequence spans 328 residues: Probable cell division protein WhiA (328 aa).

Positions 276–309 (SLEELGRLADPQMTKDAVAGRIRRLLHMADKKAS) form a DNA-binding region, H-T-H motif.

This sequence belongs to the WhiA family.

In terms of biological role, involved in cell division and chromosome segregation. This chain is Probable cell division protein WhiA, found in Corynebacterium diphtheriae (strain ATCC 700971 / NCTC 13129 / Biotype gravis).